A 39-amino-acid chain; its full sequence is Phospholipase A2 (39 aa).

His36 is an active-site residue.

The protein belongs to the phospholipase A2 family. Group III subfamily. Requires Ca(2+) as cofactor. As to expression, expressed by the venom gland.

The protein localises to the secreted. The catalysed reaction is a 1,2-diacyl-sn-glycero-3-phosphocholine + H2O = a 1-acyl-sn-glycero-3-phosphocholine + a fatty acid + H(+). Functionally, PLA2 catalyzes the calcium-dependent hydrolysis of the 2-acyl groups in 3-sn-phosphoglycerides. The protein is Phospholipase A2 of Heloderma horridum horridum (Mexican beaded lizard).